We begin with the raw amino-acid sequence, 488 residues long: Proline--tRNA ligase (488 aa).

The protein belongs to the class-II aminoacyl-tRNA synthetase family. ProS type 3 subfamily. In terms of assembly, homodimer.

The protein localises to the cytoplasm. It carries out the reaction tRNA(Pro) + L-proline + ATP = L-prolyl-tRNA(Pro) + AMP + diphosphate. Functionally, catalyzes the attachment of proline to tRNA(Pro) in a two-step reaction: proline is first activated by ATP to form Pro-AMP and then transferred to the acceptor end of tRNA(Pro). The sequence is that of Proline--tRNA ligase from Borreliella burgdorferi (strain ZS7) (Borrelia burgdorferi).